A 467-amino-acid polypeptide reads, in one-letter code: MAAASRARVAYLLRQLQRAACQCPTHSHTYSQAPGLSPSGKTTDYAFEMAVSNIRYGAGVTKEVGMDLQNMGAKNVCLMTDKNLSKLPPVQVAMDSLVKNGIPFTVYDNVRVEPTDASFMEAIEFAQKGAFDAYVAVGGGSTMDTCMAANLYASSPHSDFLDYVSAPIGKGKPVSVPLKPLIAVPTTSGTGSETTGVAIFDYEHLKVKIGIASRAIKPTLGLIDPLHTLHMPARVVANSGFDVLCHALESYTTLPYHLRSPCPSNPITRPAYQGSNPISDIWAIHALRIVAKYLKRAVRNPDDLEARSHMHLASAFAGIGFGNAGVHLCHGMSYPISGLVKTYKAKDYNVDHPLVPHGLSVVLTSPAVFTFTAQMFPERHLETAEILGADTRTARIQDAGLVLADTLRKFLFDLDVDDGLAAVGYSKADIPALVKGTLPQERVTKLAPRPQSEEDLAALFEASMKLY.

An N6-acetyllysine modification is found at Lys445. At Ser452 the chain carries Phosphoserine.

The protein belongs to the iron-containing alcohol dehydrogenase family. Hydroxyacid-oxoacid transhydrogenase subfamily.

The protein resides in the mitochondrion. It carries out the reaction (S)-3-hydroxybutanoate + 2-oxoglutarate = (R)-2-hydroxyglutarate + acetoacetate. It catalyses the reaction 4-hydroxybutanoate + 2-oxoglutarate = (R)-2-hydroxyglutarate + succinate semialdehyde. In terms of biological role, catalyzes the cofactor-independent reversible oxidation of gamma-hydroxybutyrate (GHB) to succinic semialdehyde (SSA) coupled to reduction of 2-ketoglutarate (2-KG) to D-2-hydroxyglutarate (D-2-HG). L-3-hydroxybutyrate (L-3-OHB) is also a substrate for HOT when using 2-KG as hydrogen acceptor, resulting in the formation of D-2-HG. This Pongo abelii (Sumatran orangutan) protein is Hydroxyacid-oxoacid transhydrogenase, mitochondrial (ADHFE1).